A 311-amino-acid chain; its full sequence is Ribonuclease HIII (311 aa).

The RNase H type-2 domain occupies 95–311; it reads MSIVGSDEVG…NTEKAFRLLK (217 aa). Residues Asp101, Glu102, and Asp206 each contribute to the a divalent metal cation site.

It belongs to the RNase HII family. RnhC subfamily. Requires Mn(2+) as cofactor. It depends on Mg(2+) as a cofactor.

It localises to the cytoplasm. It carries out the reaction Endonucleolytic cleavage to 5'-phosphomonoester.. Functionally, endonuclease that specifically degrades the RNA of RNA-DNA hybrids. This is Ribonuclease HIII from Bacillus cereus (strain ATCC 10987 / NRS 248).